Reading from the N-terminus, the 364-residue chain is Succinyl-diaminopimelate desuccinylase (364 aa).

His-64 is a binding site for Zn(2+). The active site involves Asp-66. Residue Asp-95 participates in Zn(2+) binding. Residue Glu-125 is the Proton acceptor of the active site. Residues Glu-126, Glu-154, and His-339 each coordinate Zn(2+).

The protein belongs to the peptidase M20A family. DapE subfamily. In terms of assembly, homodimer. Requires Zn(2+) as cofactor. The cofactor is Co(2+).

It catalyses the reaction N-succinyl-(2S,6S)-2,6-diaminopimelate + H2O = (2S,6S)-2,6-diaminopimelate + succinate. It functions in the pathway amino-acid biosynthesis; L-lysine biosynthesis via DAP pathway; LL-2,6-diaminopimelate from (S)-tetrahydrodipicolinate (succinylase route): step 3/3. Catalyzes the hydrolysis of N-succinyl-L,L-diaminopimelic acid (SDAP), forming succinate and LL-2,6-diaminopimelate (DAP), an intermediate involved in the bacterial biosynthesis of lysine and meso-diaminopimelic acid, an essential component of bacterial cell walls. The protein is Succinyl-diaminopimelate desuccinylase of Nitratiruptor sp. (strain SB155-2).